The sequence spans 928 residues: MYCBP-associated protein (928 aa).

Disordered regions lie at residues 1–38 (MKKANDRQSPPKLLEKKRAKAPEQPTPPIQEEPEPVSN) and 164–183 (EEPKPKSPKEEKRPPWAPPL). Basic and acidic residues predominate over residues 164 to 177 (EEPKPKSPKEEKRP). Position 557 is a phosphoserine (S557). The residue at position 558 (T558) is a Phosphothreonine. S564 is subject to Phosphoserine. Residues 786–881 (IPDEGQKSPP…SSATSQEPID (96 aa)) form a disordered region. Residues 806 to 865 (LGKEDRRGGAQEKKQLSARDKEEKKGSKTPSKEDRLNSKKQKAKDDKKVVKSTSRDRLLS) are compositionally biased toward basic and acidic residues.

As to quaternary structure, interacts with MYCBP. In terms of tissue distribution, expressed in brain, retina, testis, heart and lung. Not detected in liver, kidney or intestine. In brain, highly abundant in CNS neurons of the hippocampus and cerebellum. Strongly expressed in cochlea and vestibular sensory epithelia. In both the organ of Corti and the vestibular organ, expression is restricted to hair cells.

It localises to the cytoplasm. The protein localises to the membrane. Functionally, may play a role in spermatogenesis. May be involved in synaptic processes. The chain is MYCBP-associated protein from Rattus norvegicus (Rat).